The sequence spans 78 residues: MVSYVKGPAYKALSHFGKLNAPLVRSYIPNLVFWGAAAGGAVATFTEGVPLFQKTFYEKIPFFGQHWIYNPDPEDVPV.

Residues 1–26 are Mitochondrial matrix-facing; the sequence is MVSYVKGPAYKALSHFGKLNAPLVRS. A helical membrane pass occupies residues 27–46; the sequence is YIPNLVFWGAAAGGAVATFT. At 47-78 the chain is on the mitochondrial intermembrane side; sequence EGVPLFQKTFYEKIPFFGQHWIYNPDPEDVPV.

It belongs to the UQCR11/QCR10 family. Component of the ubiquinol-cytochrome c oxidoreductase (cytochrome b-c1 complex, complex III, CIII), a multisubunit enzyme composed of 10 subunits. The complex is composed of 3 respiratory subunits cytochrome b (COB), cytochrome c1 (CYT1) and Rieske protein (RIP1), 2 core protein subunits COR1 and QCR2, and 5 low-molecular weight protein subunits QCR6, QCR7, QCR8, QCR9 and QCR10. The complex exists as an obligatory dimer and forms supercomplexes (SCs) in the inner mitochondrial membrane with a monomer or a dimer of cytochrome c oxidase (complex IV, CIV), resulting in 2 different assemblies (supercomplexes III(2)IV and III(2)IV(2)).

The protein localises to the mitochondrion inner membrane. Its function is as follows. Component of the ubiquinol-cytochrome c oxidoreductase, a multisubunit transmembrane complex that is part of the mitochondrial electron transport chain which drives oxidative phosphorylation. The complex plays an important role in the uptake of multiple carbon sources present in different host niches. This is Cytochrome b-c1 complex subunit 10, mitochondrial from Candida albicans (strain SC5314 / ATCC MYA-2876) (Yeast).